The chain runs to 316 residues: uncharacterized protein (316 aa).

Thr-126 serves as a coordination point for substrate. Catalysis depends on Tyr-149, which acts as the Proton acceptor.

This sequence belongs to the NAD(P)-dependent epimerase/dehydratase family.

This is an uncharacterized protein from Bacillus subtilis (strain 168).